The sequence spans 73 residues: uncharacterized protein (73 aa).

This is an uncharacterized protein from Escherichia coli (strain K12).